Consider the following 824-residue polypeptide: Protein-glutamine gamma-glutamyltransferase K (824 aa).

The span at 1–10 shows a compositional bias: basic and acidic residues; the sequence is MEGPRSDVGR. Disordered regions lie at residues 1–44 and 61–110; these read MEGP…GGRS and DDWG…AAGD. A Phosphothreonine modification is found at Thr-20. Residues Ser-22, Ser-70, Ser-92, Ser-100, and Ser-103 each carry the phosphoserine modification. The span at 65–76 shows a compositional bias: low complexity; that stretch reads PEPSGSRSRGTS. Residues 85–100 are compositionally biased toward basic and acidic residues; the sequence is GDSRGRDSRGGRRPES. Residues Cys-385, His-444, and Asp-467 contribute to the active site. Residues Asn-507, Asp-509, Glu-556, and Glu-561 each coordinate Ca(2+). The segment at 801–824 is disordered; sequence RGFSEAVGDSRSGENIPMAFRGGA. Residue Ser-812 is modified to Phosphoserine.

The protein belongs to the transglutaminase superfamily. Transglutaminase family. As to quaternary structure, interacts with PLAAT4. Requires Ca(2+) as cofactor. Post-translationally, palmitoylated. The membrane anchorage region possesses a cluster of five cysteines within which fatty acid(s) may become thioester-linked. It is subject to phorbol ester-stimulated phosphorylation and is hypersensitive to proteolysis, which releases the enzyme in a soluble form. In terms of processing, tyrosine-phosphorylated.

It is found in the membrane. It catalyses the reaction L-glutaminyl-[protein] + L-lysyl-[protein] = [protein]-L-lysyl-N(6)-5-L-glutamyl-[protein] + NH4(+). In terms of biological role, catalyzes the cross-linking of proteins and the conjugation of polyamines to proteins. Responsible for cross-linking epidermal proteins during formation of the stratum corneum. Involved in cell proliferation. This is Protein-glutamine gamma-glutamyltransferase K (Tgm1) from Rattus norvegicus (Rat).